A 917-amino-acid polypeptide reads, in one-letter code: Spermatogenesis-associated protein 31D3 (917 aa).

The helical transmembrane segment at 29 to 49 threads the bilayer; the sequence is FICLSGLGLFILYLFYMVLTL. 3 disordered regions span residues 55 to 80, 152 to 195, and 773 to 797; these read EKNN…KDRK, SVSP…PPPL, and SQET…LRSN. Positions 63 to 74 are enriched in basic residues; it reads HQGRARRKRKSV. Residues 152–163 show a composition bias toward low complexity; that stretch reads SVSPLASSASGA. The segment covering 164–177 has biased composition (polar residues); that stretch reads ESSFTLASTPSATT. Residues 782-797 show a composition bias toward basic and acidic residues; it reads LLHDPETSSEEDLRSN.

It belongs to the SPATA31 family.

It is found in the membrane. Functionally, may play a role in spermatogenesis. The protein is Spermatogenesis-associated protein 31D3 (SPATA31D3) of Homo sapiens (Human).